The primary structure comprises 257 residues: uncharacterized protein (257 aa).

N-linked (GlcNAc...) asparagine; by host glycans are attached at residues Asn-61, Asn-95, Asn-102, Asn-111, Asn-139, Asn-148, and Asn-152. The helical transmembrane segment at Trp-233–Ile-253 threads the bilayer.

It localises to the host membrane. Its subcellular location is the virion. This is an uncharacterized protein from Acanthamoeba polyphaga (Amoeba).